We begin with the raw amino-acid sequence, 151 residues long: Small ribosomal subunit protein uS19 (151 aa).

Belongs to the universal ribosomal protein uS19 family.

Its function is as follows. Protein S19 forms a complex with S13 that binds strongly to the 16S ribosomal RNA. This chain is Small ribosomal subunit protein uS19, found in Picrophilus torridus (strain ATCC 700027 / DSM 9790 / JCM 10055 / NBRC 100828 / KAW 2/3).